A 283-amino-acid chain; its full sequence is Probable endonuclease 4 (283 aa).

The Zn(2+) site is built by His-66, His-106, Glu-141, Asp-174, His-177, His-211, Asp-224, His-226, and Glu-256.

The protein belongs to the AP endonuclease 2 family. The cofactor is Zn(2+).

It catalyses the reaction Endonucleolytic cleavage to 5'-phosphooligonucleotide end-products.. In terms of biological role, endonuclease IV plays a role in DNA repair. It cleaves phosphodiester bonds at apurinic or apyrimidinic (AP) sites, generating a 3'-hydroxyl group and a 5'-terminal sugar phosphate. This chain is Probable endonuclease 4, found in Carboxydothermus hydrogenoformans (strain ATCC BAA-161 / DSM 6008 / Z-2901).